The primary structure comprises 49 residues: Large ribosomal subunit protein bL33 (49 aa).

The protein belongs to the bacterial ribosomal protein bL33 family.

The polypeptide is Large ribosomal subunit protein bL33 (Leuconostoc citreum (strain KM20)).